We begin with the raw amino-acid sequence, 376 residues long: Tetraacyldisaccharide 4'-kinase (376 aa).

51 to 58 is an ATP binding site; the sequence is AVGGTGKT.

This sequence belongs to the LpxK family.

It catalyses the reaction a lipid A disaccharide + ATP = a lipid IVA + ADP + H(+). The protein operates within glycolipid biosynthesis; lipid IV(A) biosynthesis; lipid IV(A) from (3R)-3-hydroxytetradecanoyl-[acyl-carrier-protein] and UDP-N-acetyl-alpha-D-glucosamine: step 6/6. Functionally, transfers the gamma-phosphate of ATP to the 4'-position of a tetraacyldisaccharide 1-phosphate intermediate (termed DS-1-P) to form tetraacyldisaccharide 1,4'-bis-phosphate (lipid IVA). This Bacteroides fragilis (strain YCH46) protein is Tetraacyldisaccharide 4'-kinase.